The sequence spans 436 residues: GTPase Der (436 aa).

2 consecutive EngA-type G domains span residues Pro-4 to Glu-167 and Ile-176 to Asn-351. GTP contacts are provided by residues Gly-10–Ser-17, Asp-57–Ile-61, Asn-119–Asp-122, Gly-182–Ser-189, Asp-229–Met-233, and Asn-294–Asp-297. The 85-residue stretch at Ile-352 to Asp-436 folds into the KH-like domain.

This sequence belongs to the TRAFAC class TrmE-Era-EngA-EngB-Septin-like GTPase superfamily. EngA (Der) GTPase family. In terms of assembly, associates with the 50S ribosomal subunit.

Its function is as follows. GTPase that plays an essential role in the late steps of ribosome biogenesis. This is GTPase Der from Bacillus cytotoxicus (strain DSM 22905 / CIP 110041 / 391-98 / NVH 391-98).